A 321-amino-acid polypeptide reads, in one-letter code: Lipoyl synthase (321 aa).

The tract at residues 1 to 21 (MRHRWEDRPVAPPPDGRPTEY) is disordered. Residues Cys63, Cys68, Cys74, Cys89, Cys93, Cys96, and Ser302 each contribute to the [4Fe-4S] cluster site. Residues 75–291 (WNNRTATFMI…KKLGLEMGFS (217 aa)) form the Radical SAM core domain. The segment at 301-321 (SSYHAHEQTEDARRGALGARG) is disordered. Positions 304–314 (HAHEQTEDARR) are enriched in basic and acidic residues.

The protein belongs to the radical SAM superfamily. Lipoyl synthase family. [4Fe-4S] cluster is required as a cofactor.

The protein localises to the cytoplasm. The enzyme catalyses [[Fe-S] cluster scaffold protein carrying a second [4Fe-4S](2+) cluster] + N(6)-octanoyl-L-lysyl-[protein] + 2 oxidized [2Fe-2S]-[ferredoxin] + 2 S-adenosyl-L-methionine + 4 H(+) = [[Fe-S] cluster scaffold protein] + N(6)-[(R)-dihydrolipoyl]-L-lysyl-[protein] + 4 Fe(3+) + 2 hydrogen sulfide + 2 5'-deoxyadenosine + 2 L-methionine + 2 reduced [2Fe-2S]-[ferredoxin]. The protein operates within protein modification; protein lipoylation via endogenous pathway; protein N(6)-(lipoyl)lysine from octanoyl-[acyl-carrier-protein]: step 2/2. Its function is as follows. Catalyzes the radical-mediated insertion of two sulfur atoms into the C-6 and C-8 positions of the octanoyl moiety bound to the lipoyl domains of lipoate-dependent enzymes, thereby converting the octanoylated domains into lipoylated derivatives. The polypeptide is Lipoyl synthase (Rubrobacter xylanophilus (strain DSM 9941 / JCM 11954 / NBRC 16129 / PRD-1)).